Reading from the N-terminus, the 490-residue chain is Ribosome biogenesis protein YTM1 (490 aa).

A disordered region spans residues 1 to 22; that stretch reads MDGLEDGPLDASTATSQKPQRQ. Positions 23–104 are ubiquitin-like (UBL) domain; that stretch reads VRLKLTSRHE…ETTLDVEYVR (82 aa). WD repeat units lie at residues 116 to 168, 175 to 213, 224 to 263, 298 to 338, 340 to 379, 385 to 425, and 449 to 487; these read LHDD…IALS, GHTASVKCARMVSPSQIISSGLDRTVRLWKYTESEDGFS, GHKGSVDSISMHAQSHRILSASADHSVGFWSTRKSENPAA, SHTA…LVDT, TASHSLLSVSHMPELSLLASGTSARHITLIDPRASATTVS, GHTN…TDKD, and GEGVKVFDVCWDKSVGIVSSGEDKMIQINRGEGVLPNGG. A disordered region spans residues 255–286; the sequence is TRKSENPAAPESLLPSNTSRSSKRRKLNSSVS.

This sequence belongs to the WD repeat WDR12/YTM1 family. Component of the NOP7 complex, composed of ERB1, NOP7 and YTM1. The complex is held together by ERB1, which interacts with NOP7 via its N-terminal domain and with YTM1 via a high-affinity interaction between the seven-bladed beta-propeller domains of the 2 proteins. The NOP7 complex associates with the 66S pre-ribosome. Interacts (via UBL domain) with MDN1 (via VWFA/MIDAS domain).

Its subcellular location is the nucleus. The protein resides in the nucleolus. It localises to the nucleoplasm. In terms of biological role, component of the NOP7 complex, which is required for maturation of the 25S and 5.8S ribosomal RNAs and formation of the 60S ribosome. The sequence is that of Ribosome biogenesis protein YTM1 from Ajellomyces capsulatus (strain NAm1 / WU24) (Darling's disease fungus).